A 266-amino-acid chain; its full sequence is MKLSLSSPPYADAPVVVLISGLGGSGSYWLPQLAVLEQEYQVVCYDQRGTGNNPDTLAEDYSIAQMAAELHQALVAAGIERYAVVGHALGALVGMQLALDYPASVTMLVSVNGWLRINAHTRRCFQVRERLLYSGGAQAWVEAQPLFLYPADWMAARAPRLEAEDALALAHFQGKNNLLRRLNALKRADFSHHADRIRRPVQIICASDDLLVPTACSSELHAALPDSQKMVMPYGGHACNVTDPETFNALLLNGLASLLHHREAAL.

The 102-residue stretch at 14–115 (PVVVLISGLG…TMLVSVNGWL (102 aa)) folds into the AB hydrolase-1 domain.

Belongs to the AB hydrolase superfamily. Hydrolase RutD family.

The catalysed reaction is carbamate + 2 H(+) = NH4(+) + CO2. Its function is as follows. Involved in pyrimidine catabolism. May facilitate the hydrolysis of carbamate, a reaction that can also occur spontaneously. The sequence is that of Putative carbamate hydrolase RutD from Shigella flexneri serotype 5b (strain 8401).